A 166-amino-acid chain; its full sequence is Protein UTR5 (166 aa).

The protein is Protein UTR5 (UTR5) of Saccharomyces cerevisiae (strain ATCC 204508 / S288c) (Baker's yeast).